A 400-amino-acid polypeptide reads, in one-letter code: Putative F-box protein At1g30920 (400 aa).

Residues 4-49 form the F-box domain; it reads EENTDSIPIDLILDILSRLPSKSIARCRCVSKLWESMIRQSYFTEL.

This chain is Putative F-box protein At1g30920, found in Arabidopsis thaliana (Mouse-ear cress).